A 298-amino-acid polypeptide reads, in one-letter code: Plasmodesmata-located protein 7 (298 aa).

An N-terminal signal peptide occupies residues 1–30 (MPMAKLRNIIKTLSIFFFLIAATAPSLSSA). At 31–258 (TSATDTFVFG…YKTNYGGEKT (228 aa)) the chain is on the extracellular side. 2 Gnk2-homologous domains span residues 35–139 (DTFV…NISF) and 140–240 (LGQE…TDGA). 6 disulfides stabilise this stretch: C42-C117, C93-C102, C105-C130, C152-C218, C194-C203, and C206-C231. A helical membrane pass occupies residues 259-279 (FAIIIGLLAAVVLLIIFLLFL). The necessary and sufficient for plasmodesmal targeting stretch occupies residues 259 to 279 (FAIIIGLLAAVVLLIIFLLFL). Over 280 to 298 (RGVCSRGGDFSILHSFTLI) the chain is Cytoplasmic.

The protein belongs to the cysteine-rich repeat secretory protein family. Plasmodesmata-located proteins (PDLD) subfamily. As to quaternary structure, (Microbial infection) Interacts with Grapevine fanleaf virus (GFLV) 2B-MP. In terms of tissue distribution, highly expressed in lateral root and elongation zone.

It is found in the cell membrane. It localises to the cell junction. The protein resides in the plasmodesma. Its function is as follows. Modulates cell-to-cell trafficking. This is Plasmodesmata-located protein 7 from Arabidopsis thaliana (Mouse-ear cress).